The following is a 199-amino-acid chain: Recombination protein RecR (199 aa).

Residues 57–72 form a C4-type zinc finger; sequence CQSCRTYTEETLCPIC. The Toprim domain maps to 81–176; it reads STICVVETPA…MISRIAHGVP (96 aa).

It belongs to the RecR family.

Its function is as follows. May play a role in DNA repair. It seems to be involved in an RecBC-independent recombinational process of DNA repair. It may act with RecF and RecO. This chain is Recombination protein RecR, found in Shewanella putrefaciens (strain CN-32 / ATCC BAA-453).